The sequence spans 241 residues: ATP synthase subunit a (241 aa).

Transmembrane regions (helical) follow at residues 21-41 (LASI…AIAC), 84-104 (VTLI…AIVI), 116-136 (DATV…YYGI), 183-203 (ILIG…WIIG), and 207-227 (LIAW…IFIM).

This sequence belongs to the ATPase A chain family. In terms of assembly, F-type ATPases have 2 components, CF(1) - the catalytic core - and CF(0) - the membrane proton channel. CF(1) has five subunits: alpha(3), beta(3), gamma(1), delta(1), epsilon(1). CF(0) has three main subunits: a(1), b(2) and c(9-12). The alpha and beta chains form an alternating ring which encloses part of the gamma chain. CF(1) is attached to CF(0) by a central stalk formed by the gamma and epsilon chains, while a peripheral stalk is formed by the delta and b chains.

It is found in the cell membrane. Functionally, key component of the proton channel; it plays a direct role in the translocation of protons across the membrane. This chain is ATP synthase subunit a, found in Staphylococcus carnosus (strain TM300).